The sequence spans 267 residues: 3-methyl-2-oxobutanoate hydroxymethyltransferase (267 aa).

Residues aspartate 46 and aspartate 85 each coordinate Mg(2+). Residues 46 to 47, aspartate 85, and lysine 115 each bind 3-methyl-2-oxobutanoate; that span reads DS. Glutamate 117 provides a ligand contact to Mg(2+). Glutamate 184 acts as the Proton acceptor in catalysis.

The protein belongs to the PanB family. Homodecamer; pentamer of dimers. Mg(2+) is required as a cofactor.

Its subcellular location is the cytoplasm. The enzyme catalyses 3-methyl-2-oxobutanoate + (6R)-5,10-methylene-5,6,7,8-tetrahydrofolate + H2O = 2-dehydropantoate + (6S)-5,6,7,8-tetrahydrofolate. It functions in the pathway cofactor biosynthesis; (R)-pantothenate biosynthesis; (R)-pantoate from 3-methyl-2-oxobutanoate: step 1/2. Functionally, catalyzes the reversible reaction in which hydroxymethyl group from 5,10-methylenetetrahydrofolate is transferred onto alpha-ketoisovalerate to form ketopantoate. The protein is 3-methyl-2-oxobutanoate hydroxymethyltransferase of Geotalea uraniireducens (strain Rf4) (Geobacter uraniireducens).